A 417-amino-acid chain; its full sequence is Gamma-glutamyl phosphate reductase (417 aa).

This sequence belongs to the gamma-glutamyl phosphate reductase family.

It is found in the cytoplasm. The enzyme catalyses L-glutamate 5-semialdehyde + phosphate + NADP(+) = L-glutamyl 5-phosphate + NADPH + H(+). It participates in amino-acid biosynthesis; L-proline biosynthesis; L-glutamate 5-semialdehyde from L-glutamate: step 2/2. Catalyzes the NADPH-dependent reduction of L-glutamate 5-phosphate into L-glutamate 5-semialdehyde and phosphate. The product spontaneously undergoes cyclization to form 1-pyrroline-5-carboxylate. This chain is Gamma-glutamyl phosphate reductase, found in Polynucleobacter asymbioticus (strain DSM 18221 / CIP 109841 / QLW-P1DMWA-1) (Polynucleobacter necessarius subsp. asymbioticus).